Reading from the N-terminus, the 95-residue chain is Histone-like DNA-binding protein (95 aa).

This sequence belongs to the bacterial histone-like protein family.

The protein is Histone-like DNA-binding protein of Rickettsia montanensis.